Reading from the N-terminus, the 222-residue chain is tRNA (guanine-N(1)-)-methyltransferase (222 aa).

Residues glycine 112 and 132 to 137 (IGDYVL) contribute to the S-adenosyl-L-methionine site.

This sequence belongs to the RNA methyltransferase TrmD family. As to quaternary structure, homodimer.

The protein localises to the cytoplasm. It catalyses the reaction guanosine(37) in tRNA + S-adenosyl-L-methionine = N(1)-methylguanosine(37) in tRNA + S-adenosyl-L-homocysteine + H(+). In terms of biological role, specifically methylates guanosine-37 in various tRNAs. This Azobacteroides pseudotrichonymphae genomovar. CFP2 protein is tRNA (guanine-N(1)-)-methyltransferase.